The primary structure comprises 220 residues: MAAATGTRKKKTPRPGQWKLWLLYTAGFVPAVWTFYLGATGQLGADPVKTFEHLLGLWALRFLILTLLVTPIRDLTGITLLRYRRALGLLAFYYALMHFTTYMVLDQGLNLSAIITDIVRRPFITIGMISLALLVPLALTSNNWSIRKLGRRWSSLHKLVYIAIAGSAVHFLMSVKSWPAEPVIYAAIVAALLLWRLARPYLRTRKPALRPRGEAIALRK.

The next 6 membrane-spanning stretches (helical) occupy residues 20-40 (LWLL…LGAT), 52-72 (EHLL…VTPI), 86-106 (ALGL…MVLD), 122-142 (PFIT…LTSN), 153-173 (WSSL…HFLM), and 175-195 (VKSW…LLLW).

Belongs to the MsrQ family. In terms of assembly, heterodimer of a catalytic subunit (MsrP) and a heme-binding subunit (MsrQ). Requires FMN as cofactor. Heme b serves as cofactor.

Its subcellular location is the cell inner membrane. In terms of biological role, part of the MsrPQ system that repairs oxidized periplasmic proteins containing methionine sulfoxide residues (Met-O), using respiratory chain electrons. Thus protects these proteins from oxidative-stress damage caused by reactive species of oxygen and chlorine generated by the host defense mechanisms. MsrPQ is essential for the maintenance of envelope integrity under bleach stress, rescuing a wide series of structurally unrelated periplasmic proteins from methionine oxidation. MsrQ provides electrons for reduction to the reductase catalytic subunit MsrP, using the quinone pool of the respiratory chain. This chain is Protein-methionine-sulfoxide reductase heme-binding subunit MsrQ, found in Brucella abortus (strain S19).